Consider the following 31-residue polypeptide: Sarcolipin (31 aa).

Residues 1 to 7 (MGINTRE) are Cytoplasmic-facing. Residues 8-26 (LFLNFTIVLITVILMWLLV) traverse the membrane as a helical segment. Residues 27–31 (RSYQY) lie on the Lumenal side of the membrane.

Belongs to the sarcolipin family. Homooligomer. Can also form heterooligomers with other sarcoplasmic/endoplasmic reticulum calcium ATPase (SERCA) regulators ARLN, ERLN, PLN and STRIT1/DWORF. Monomer. Interacts with calcium ATPase ATP2A1/SERCA1. Interacts as a monomer with ATP2A2/SERCA2; the interaction decreases ATP2A2 Ca(2+) affinity. Interacts with VMP1; VMP1 competes with PLN and SLN to prevent them from forming an inhibitory complex with ATP2A2.

The protein localises to the sarcoplasmic reticulum membrane. It is found in the endoplasmic reticulum membrane. In terms of biological role, reversibly inhibits the activity of ATP2A1/SERCA1 and ATP2A2/SERCA2 in sarcoplasmic reticulum by decreasing the apparent affinity of the ATPase for Ca(2+). Also inhibits the activity of ATP2A3/SERCA3. Modulates calcium re-uptake during muscle relaxation and plays an important role in calcium homeostasis in muscle. Required for muscle-based, non-shivering thermogenesis. The sequence is that of Sarcolipin from Homo sapiens (Human).